The following is a 346-amino-acid chain: Cysteinyl leukotriene receptor 2 (346 aa).

Topologically, residues 1–42 (MERKFMSLQPSISVSEMEPNGTFSNNNSRNCTIENFKREFFP) are extracellular. Residues Asn-20, Asn-26, and Asn-30 are each glycosylated (N-linked (GlcNAc...) asparagine). A helical membrane pass occupies residues 43-63 (IVYLIIFFWGVLGNGLSIYVF). Residues 64-72 (LQPYKKSTS) are Cytoplasmic-facing. A helical transmembrane segment spans residues 73–93 (VNVFMLNLAISDLLFISTLPF). At 94–123 (RADYYLRGSNWIFGDLACRIMSYSLYVNMY) the chain is on the extracellular side. Residues Cys-111 and Cys-187 are joined by a disulfide bond. The chain crosses the membrane as a helical span at residues 124-144 (SSIYFLTVLSVVRFLAMVHPF). The Cytoplasmic segment spans residues 145–153 (RLLHVTSIR). A helical transmembrane segment spans residues 154–174 (SAWILCGIIWILIMASSIMLL). Topologically, residues 175 to 204 (DSGSEQNGSVTSCLELNLYKIAKLQTMNYI) are extracellular. A glycan (N-linked (GlcNAc...) asparagine) is linked at Asn-181. A helical transmembrane segment spans residues 205–225 (ALVVGCLLPFFTLSICYLLII). At 226–245 (RVLLKVEVPESGLRVSHRKA) the chain is on the cytoplasmic side. The chain crosses the membrane as a helical span at residues 246-266 (LTTIIITLIIFFLCFLPYHTL). Residues 267–286 (RTVHLTTWKVGLCKDRLHKA) are Extracellular-facing. The chain crosses the membrane as a helical span at residues 287–307 (LVITLALAAANACFNPLLYYF). Residues 308 to 346 (AGENFKDRLKSALRKGHPQKAKTKCVFPVSVWLRKETRV) lie on the Cytoplasmic side of the membrane.

Belongs to the G-protein coupled receptor 1 family. In terms of tissue distribution, widely expressed, with highest levels in the heart, placenta, spleen, peripheral blood leukocytes and adrenal gland. In lung, expressed in the interstitial macrophages, and slightly in smooth muscle cells.

The protein localises to the cell membrane. In terms of biological role, receptor for cysteinyl leukotrienes. The response is mediated via a G-protein that activates a phosphatidylinositol-calcium second messenger system. Stimulation by BAY u9773, a partial agonist, induces specific contractions of pulmonary veins and might also have an indirect role in the relaxation of the pulmonary vascular endothelium. The rank order of affinities for the leukotrienes is LTC4 = LTD4 &gt;&gt; LTE4. The protein is Cysteinyl leukotriene receptor 2 (CYSLTR2) of Homo sapiens (Human).